A 151-amino-acid chain; its full sequence is Putative pre-16S rRNA nuclease (151 aa).

Belongs to the YqgF nuclease family.

It localises to the cytoplasm. Its function is as follows. Could be a nuclease involved in processing of the 5'-end of pre-16S rRNA. The sequence is that of Putative pre-16S rRNA nuclease from Nitrosospira multiformis (strain ATCC 25196 / NCIMB 11849 / C 71).